The chain runs to 632 residues: Chaperone protein HtpG (632 aa).

The interval 1–339 (MTQQTMSFQA…SSDLPLNVSR (339 aa)) is a; substrate-binding. Residues 340–559 (EILQESRDVK…DNDMSGYLQR (220 aa)) are b. The tract at residues 560-632 (MLKAAGQNAP…TNALLLSRAA (73 aa)) is c.

This sequence belongs to the heat shock protein 90 family. As to quaternary structure, homodimer.

Its subcellular location is the cytoplasm. Functionally, molecular chaperone. Has ATPase activity. This Burkholderia thailandensis (strain ATCC 700388 / DSM 13276 / CCUG 48851 / CIP 106301 / E264) protein is Chaperone protein HtpG.